Consider the following 318-residue polypeptide: Phosphatidylglycerol--prolipoprotein diacylglyceryl transferase (318 aa).

3 consecutive transmembrane segments (helical) span residues 24 to 44 (GPST…YLLP), 60 to 80 (LLLL…VFEI), and 115 to 135 (LFSG…LFIT). Arginine 164 contacts a 1,2-diacyl-sn-glycero-3-phospho-(1'-sn-glycerol). 2 consecutive transmembrane segments (helical) span residues 198 to 218 (VPVW…FFYF) and 285 to 305 (GFSQ…FFIL).

This sequence belongs to the Lgt family.

The protein localises to the cell inner membrane. It carries out the reaction L-cysteinyl-[prolipoprotein] + a 1,2-diacyl-sn-glycero-3-phospho-(1'-sn-glycerol) = an S-1,2-diacyl-sn-glyceryl-L-cysteinyl-[prolipoprotein] + sn-glycerol 1-phosphate + H(+). It participates in protein modification; lipoprotein biosynthesis (diacylglyceryl transfer). Catalyzes the transfer of the diacylglyceryl group from phosphatidylglycerol to the sulfhydryl group of the N-terminal cysteine of a prolipoprotein, the first step in the formation of mature lipoproteins. The polypeptide is Phosphatidylglycerol--prolipoprotein diacylglyceryl transferase (Leptospira interrogans serogroup Icterohaemorrhagiae serovar copenhageni (strain Fiocruz L1-130)).